Here is a 546-residue protein sequence, read N- to C-terminus: Arginine--tRNA ligase (546 aa).

The 'HIGH' region signature appears at 122–132 (ANPTGPFTVGH).

The protein belongs to the class-I aminoacyl-tRNA synthetase family. Monomer.

Its subcellular location is the cytoplasm. The catalysed reaction is tRNA(Arg) + L-arginine + ATP = L-arginyl-tRNA(Arg) + AMP + diphosphate. In Thermotoga maritima (strain ATCC 43589 / DSM 3109 / JCM 10099 / NBRC 100826 / MSB8), this protein is Arginine--tRNA ligase (argS).